We begin with the raw amino-acid sequence, 267 residues long: Small ribosomal subunit protein uS2 (267 aa).

The segment at 234–267 is disordered; that stretch reads DNAEEELAEAISQEEPSAAEELPDDMADNENEFE. Residues 250-267 are compositionally biased toward acidic residues; the sequence is SAAEELPDDMADNENEFE.

Belongs to the universal ribosomal protein uS2 family.

This chain is Small ribosomal subunit protein uS2, found in Dichelobacter nodosus (strain VCS1703A).